We begin with the raw amino-acid sequence, 107 residues long: MMKVLVVVALLVTLISYSSSEGIDDLEADELLSLMANEQTRKECISKHHECTSNKHGCCRGNFFKYKCQCTTVVTQDGEQTERCFCGTPPHHKAAELVVGFGKKIFG.

An N-terminal signal peptide occupies residues 1 to 20 (MMKVLVVVALLVTLISYSSS). The propeptide occupies 21 to 41 (EGIDDLEADELLSLMANEQTR). 4 cysteine pairs are disulfide-bonded: Cys-44–Cys-59, Cys-51–Cys-68, Cys-58–Cys-86, and Cys-70–Cys-84.

Belongs to the neurotoxin 19 (CSTX) family. 04 (U1-Lctx) subfamily. As to expression, expressed by the venom gland.

Its subcellular location is the secreted. The sequence is that of U1-lycotoxin-Ls1i from Lycosa singoriensis (Wolf spider).